The sequence spans 32 residues: Cypmaclein (32 aa).

The protein belongs to the GASA family. In terms of tissue distribution, expressed in pollen (at protein level).

The polypeptide is Cypmaclein (Cupressus sempervirens (Italian cypress)).